A 315-amino-acid chain; its full sequence is Protein OPG185 (315 aa).

Positions 1 to 16 (MTRLPILLLLISLVYA) are cleaved as a signal peptide. Positions 17–121 (TPFPQTSKKI…NDTDKVDYEE (105 aa)) constitute an Ig-like V-type domain. Residues 17 to 279 (TPFPQTSKKI…SNYKTKDFVE (263 aa)) are Virion surface-facing. Cys-34 and Cys-103 form a disulfide bridge. Residues Asn-37, Asn-69, Asn-112, and Asn-161 are each glycosylated (N-linked (GlcNAc...) asparagine; by host). The disordered stretch occupies residues 194–213 (TVSATSGESTTDETPEPITD). Asn-254 carries an N-linked (GlcNAc...) asparagine; by host glycan. A helical membrane pass occupies residues 280 to 303 (IFGITALIILSAVAIFCITYYICN). The Intravirion segment spans residues 304–315 (KRSRKYKTENKV).

It belongs to the orthopoxvirus OPG185 family. As to quaternary structure, heterodimerizes with OPG040. The heterodimer OPG185-OPG040 interacts with components of the entry fusion complex OPG143 and OPG094. Heterodimer with C3/VPC protein; disulfide-linked. In terms of processing, glycosylated; contains phosphate and sulfate-substituted glycans. O-glycosylation is required for hemagglutination and hemadsorption activities of infected cell membranes.

It is found in the virion membrane. The protein localises to the host membrane. Its function is as follows. Prevents cell to cell fusion by interacting with and directing the viral OPG040 protein on the host plasma membrane. The OPG185-OPG040 complex associates with components of the entry fusion complex (EFC) presumably to avoid superinfection and syncytium formation. Via its interaction with C3/VCP protein, protects the infected cell and probably also the extracellular enveloped virus from complement attack. The polypeptide is Protein OPG185 (OPG185) (Vaccinia virus (strain Copenhagen) (VACV)).